We begin with the raw amino-acid sequence, 663 residues long: 4-hydroxy-3-methylbut-2-en-1-yl diphosphate synthase (flavodoxin) (663 aa).

The [4Fe-4S] cluster site is built by C568, C571, C602, and E609.

Belongs to the IspG family. [4Fe-4S] cluster serves as cofactor.

The catalysed reaction is (2E)-4-hydroxy-3-methylbut-2-enyl diphosphate + oxidized [flavodoxin] + H2O + 2 H(+) = 2-C-methyl-D-erythritol 2,4-cyclic diphosphate + reduced [flavodoxin]. The protein operates within isoprenoid biosynthesis; isopentenyl diphosphate biosynthesis via DXP pathway; isopentenyl diphosphate from 1-deoxy-D-xylulose 5-phosphate: step 5/6. Converts 2C-methyl-D-erythritol 2,4-cyclodiphosphate (ME-2,4cPP) into 1-hydroxy-2-methyl-2-(E)-butenyl 4-diphosphate. The protein is 4-hydroxy-3-methylbut-2-en-1-yl diphosphate synthase (flavodoxin) of Leptospira borgpetersenii serovar Hardjo-bovis (strain L550).